A 333-amino-acid chain; its full sequence is Phosphate acetyltransferase (333 aa).

The protein belongs to the phosphate acetyltransferase and butyryltransferase family.

The protein resides in the cytoplasm. The enzyme catalyses acetyl-CoA + phosphate = acetyl phosphate + CoA. It functions in the pathway metabolic intermediate biosynthesis; acetyl-CoA biosynthesis; acetyl-CoA from acetate: step 2/2. This Clostridium acetobutylicum (strain ATCC 824 / DSM 792 / JCM 1419 / IAM 19013 / LMG 5710 / NBRC 13948 / NRRL B-527 / VKM B-1787 / 2291 / W) protein is Phosphate acetyltransferase (pta).